The chain runs to 485 residues: Protein nucleotidyltransferase YdiU (485 aa).

Positions 85, 87, 88, 108, 120, 121, 171, and 178 each coordinate ATP. The active-site Proton acceptor is the aspartate 249. Mg(2+) contacts are provided by asparagine 250 and aspartate 259. Aspartate 259 is an ATP binding site. The interval 462–485 (LPTTPNYQDPPADGDRSYQTFCGT) is disordered.

This sequence belongs to the SELO family. Requires Mg(2+) as cofactor. Mn(2+) serves as cofactor.

The enzyme catalyses L-seryl-[protein] + ATP = 3-O-(5'-adenylyl)-L-seryl-[protein] + diphosphate. It catalyses the reaction L-threonyl-[protein] + ATP = 3-O-(5'-adenylyl)-L-threonyl-[protein] + diphosphate. The catalysed reaction is L-tyrosyl-[protein] + ATP = O-(5'-adenylyl)-L-tyrosyl-[protein] + diphosphate. It carries out the reaction L-histidyl-[protein] + UTP = N(tele)-(5'-uridylyl)-L-histidyl-[protein] + diphosphate. The enzyme catalyses L-seryl-[protein] + UTP = O-(5'-uridylyl)-L-seryl-[protein] + diphosphate. It catalyses the reaction L-tyrosyl-[protein] + UTP = O-(5'-uridylyl)-L-tyrosyl-[protein] + diphosphate. Nucleotidyltransferase involved in the post-translational modification of proteins. It can catalyze the addition of adenosine monophosphate (AMP) or uridine monophosphate (UMP) to a protein, resulting in modifications known as AMPylation and UMPylation. In Teredinibacter turnerae (strain ATCC 39867 / T7901), this protein is Protein nucleotidyltransferase YdiU.